The sequence spans 803 residues: Leucine--tRNA ligase (803 aa).

Residues 40-51 carry the 'HIGH' region motif; that stretch reads PYPSGAGLHVGH. The 'KMSKS' region signature appears at 575 to 579; it reads KMSKS. Position 578 (Lys-578) interacts with ATP.

Belongs to the class-I aminoacyl-tRNA synthetase family.

The protein localises to the cytoplasm. The catalysed reaction is tRNA(Leu) + L-leucine + ATP = L-leucyl-tRNA(Leu) + AMP + diphosphate. This chain is Leucine--tRNA ligase, found in Listeria monocytogenes serotype 4b (strain F2365).